Consider the following 567-residue polypeptide: DNA-binding protein REPIN1 (567 aa).

Residues 17–52 (PRLLSGPSQESPQTLGKESRGLRQQGTSVAQSGAQA) are disordered. A compositionally biased stretch (polar residues) spans 22 to 50 (GPSQESPQTLGKESRGLRQQGTSVAQSGA). Phosphoserine is present on Ser-27. Residue Thr-30 is modified to Phosphothreonine. Position 33 is an N6-acetyllysine (Lys-33). Residues 57 to 79 (HRCAHCRRHFPGWVALWLHTRRC) form a C2H2-type 1; atypical zinc finger. 7 C2H2-type zinc fingers span residues 85-107 (LPCP…RQVH), 116-138 (FACH…LRAH), 145-168 (IACP…RRCH), 177-199 (FICG…KRVH), 236-258 (FQCA…RRVH), 264-286 (HQCP…RRIH), and 292-314 (YPCK…SKIH). Position 276 is an N6-acetyllysine (Lys-276). Positions 305–315 (PNLLSHSKIHK) are enriched in basic residues. The tract at residues 305 to 372 (PNLLSHSKIH…HPQDPIEAPP (68 aa)) is disordered. The segment covering 345–362 (PAVPLKPAQEPPPGAPPE) has biased composition (pro residues). 7 C2H2-type zinc fingers span residues 375-397 (YSCD…QRQH), 403-425 (FTCA…SRVH), 431-453 (FACE…RRDH), 459-481 (FVCP…RRIH), 487-509 (YVCP…RRIH), 515-537 (YACP…RKSH), and 543-565 (FCCA…QKKH).

Homodimers and homomultimers. Found in a complex with RIP60 and RIP100. In terms of tissue distribution, expressed in adipose tissue and bone tissue.

It is found in the nucleus. It localises to the cytoplasm. The protein localises to the cytosol. Sequence-specific double-stranded DNA-binding protein. Binds ATT-rich and T-rich DNA sequences and facilitates DNA bending. May regulate the expression of genes involved in cellular fatty acid import, including SCARB1/CD36, and genes involved in lipid droplet formation. May regulate the expression of LCN2, and thereby influence iron metabolism and apoptosis-related pathways. May regulate the expression of genes involved in glucose transport. This Homo sapiens (Human) protein is DNA-binding protein REPIN1 (REPIN1).